Here is a 182-residue protein sequence, read N- to C-terminus: NAD(P)H-quinone oxidoreductase subunit J (182 aa).

This sequence belongs to the complex I 30 kDa subunit family. NDH-1 can be composed of about 15 different subunits; different subcomplexes with different compositions have been identified which probably have different functions.

It localises to the cellular thylakoid membrane. It catalyses the reaction a plastoquinone + NADH + (n+1) H(+)(in) = a plastoquinol + NAD(+) + n H(+)(out). It carries out the reaction a plastoquinone + NADPH + (n+1) H(+)(in) = a plastoquinol + NADP(+) + n H(+)(out). In terms of biological role, NDH-1 shuttles electrons from an unknown electron donor, via FMN and iron-sulfur (Fe-S) centers, to quinones in the respiratory and/or the photosynthetic chain. The immediate electron acceptor for the enzyme in this species is believed to be plastoquinone. Couples the redox reaction to proton translocation, and thus conserves the redox energy in a proton gradient. Cyanobacterial NDH-1 also plays a role in inorganic carbon-concentration. This Synechococcus sp. (strain WH7803) protein is NAD(P)H-quinone oxidoreductase subunit J.